The primary structure comprises 120 residues: Photosystem II extrinsic protein U (120 aa).

Residues 1–29 form the signal peptide; that stretch reads MKRLLSLLTGVLVMTGLLMALIFPQSAYA.

The protein belongs to the PsbU family. In terms of assembly, PSII is composed of 1 copy each of membrane proteins PsbA, PsbB, PsbC, PsbD, PsbE, PsbF, PsbH, PsbI, PsbJ, PsbK, PsbL, PsbM, PsbT, PsbX, PsbY, Psb30/Ycf12, peripheral proteins PsbO, CyanoQ (PsbQ), PsbU, PsbV and a large number of cofactors. It forms dimeric complexes.

Its subcellular location is the cellular thylakoid membrane. Functionally, one of the extrinsic, lumenal subunits of photosystem II (PSII). PSII is a light-driven water plastoquinone oxidoreductase, using light energy to abstract electrons from H(2)O, generating a proton gradient subsequently used for ATP formation. The extrinsic proteins stabilize the structure of photosystem II oxygen-evolving complex (OEC), the ion environment of oxygen evolution and protect the OEC against heat-induced inactivation. This is Photosystem II extrinsic protein U from Prochlorococcus marinus (strain MIT 9313).